A 142-amino-acid chain; its full sequence is Hemoglobin subunit theta-1 (142 aa).

The Globin domain occupies Ala-2 to Arg-142. 2 residues coordinate heme b: His-59 and His-88.

Belongs to the globin family.

In Homo sapiens (Human), this protein is Hemoglobin subunit theta-1 (HBQ1).